The sequence spans 760 residues: Catalase-peroxidase (760 aa).

The interval 1–24 (MAESKCPFKSQGSRSNVAGGGTRN) is disordered. A cross-link (tryptophyl-tyrosyl-methioninium (Trp-Tyr) (with M-268)) is located at residues 96 to 242 (WHSAGTYRVF…LAAAHMGLIY (147 aa)). H97 (proton acceptor) is an active-site residue. A cross-link (tryptophyl-tyrosyl-methioninium (Tyr-Met) (with W-96)) is located at residues 242-268 (YVNPEGPDGNPDPVAAAHDIRVTFGRM). Residue H283 coordinates heme b.

It belongs to the peroxidase family. Peroxidase/catalase subfamily. Homodimer or homotetramer. It depends on heme b as a cofactor. In terms of processing, formation of the three residue Trp-Tyr-Met cross-link is important for the catalase, but not the peroxidase activity of the enzyme.

It is found in the cytoplasm. The catalysed reaction is H2O2 + AH2 = A + 2 H2O. It carries out the reaction 2 H2O2 = O2 + 2 H2O. Its function is as follows. Bifunctional enzyme with both catalase and broad-spectrum peroxidase activity. The chain is Catalase-peroxidase from Aspergillus clavatus (strain ATCC 1007 / CBS 513.65 / DSM 816 / NCTC 3887 / NRRL 1 / QM 1276 / 107).